We begin with the raw amino-acid sequence, 277 residues long: Small ribosomal subunit protein uS2 (277 aa).

The interval 247-277 (LSAFESSQDDESDEENREEDLLAKKFDGEAN) is disordered. A compositionally biased stretch (acidic residues) spans 253–264 (SQDDESDEENRE). Over residues 265 to 277 (EDLLAKKFDGEAN) the composition is skewed to basic and acidic residues.

This sequence belongs to the universal ribosomal protein uS2 family.

The chain is Small ribosomal subunit protein uS2 (rpsB) from Chlamydia pneumoniae (Chlamydophila pneumoniae).